We begin with the raw amino-acid sequence, 1875 residues long: Protein MLP1 (1875 aa).

N-acetylserine is present on Ser-2. Coiled-coil stretches lie at residues 69 to 487 (ELKA…IQYL) and 531 to 1678 (ERLV…SAES). Residue Thr-337 is modified to Phosphothreonine. Ser-379 is subject to Phosphoserine. A Required for nuclear localization motif is present at residues 1496–1565 (QPSNINMEEI…EEKVEERIKS (70 aa)). The disordered stretch occupies residues 1641–1689 (KKSFDEGKQQAMMKTTLLERKLAKMESQLSETKQSAESPPKSVNNVQNP). The span at 1667 to 1688 (SQLSETKQSAESPPKSVNNVQN) shows a compositional bias: polar residues. Phosphoserine is present on residues Ser-1670 and Ser-1710. Positions 1716-1725 (KLNSKSSSGG) are enriched in low complexity. The tract at residues 1716-1875 (KLNSKSSSGG…TDKVNDENSI (160 aa)) is disordered. A compositionally biased stretch (polar residues) spans 1728 to 1737 (PFTSPSPNKH). Phosphoserine is present on Ser-1733. Positions 1738-1748 (LQNDNDKRESL) are enriched in basic and acidic residues. The segment covering 1787-1801 (TSNNPAQKDSSNRNV) has biased composition (polar residues). Ser-1803 is modified (phosphoserine). Basic and acidic residues-rich tracts occupy residues 1807–1840 (TEKK…GELK) and 1865–1875 (ETDKVNDENSI). Residues 1834–1866 (DEVGELKNDEDDTTENINESKKIKTEDEEEKET) are a coiled coil.

As to quaternary structure, component of the nuclear pore complex (NPC). NPC constitutes the exclusive means of nucleocytoplasmic transport. NPCs allow the passive diffusion of ions and small molecules and the active, nuclear transport receptor-mediated bidirectional transport of macromolecules such as proteins, RNAs, ribonucleoparticles (RNPs), and ribosomal subunits across the nuclear envelope. Due to its 8-fold rotational symmetry, all subunits are present with 8 copies or multiples thereof. Interacts with NAB2, a hnRNP required for mRNA export. Interacts with MLP2. May be phosphorylated by CDC28.

It is found in the nucleus. Its subcellular location is the nuclear pore complex. Together with the closely related MLP2, involved in the structural and functional organization of perinuclear chromatin. Together with MLP2, associates with the nuclear pore complex and form filamentous structures along the nuclear periphery. Has a role in the localization of Esc1 to nucleolar regions. Together with MLP2, mediates tethering of the some telomeres to the nuclear periphery, probably mediated by YKU70/YKU80 (HDF1/HDF2) heterodimer and show perinuclear location dependent silencing. MLP1 and MLP2 are involved in telomere length regulation but not silencing or telomere anchoring. Recognizes the 5'-splice site of pre-mRNAs and retains unspliced pre-mRNA in the nucleus without affecting splicing itself. In Saccharomyces cerevisiae (strain ATCC 204508 / S288c) (Baker's yeast), this protein is Protein MLP1 (MLP1).